A 133-amino-acid chain; its full sequence is DUF35 domain-containing scaffold protein (133 aa).

4 residues coordinate Zn(2+): cysteine 23, cysteine 26, cysteine 37, and cysteine 40.

Belongs to the scaffold protein DUF35 family. In terms of assembly, interacts with acetoacetyl-CoA thiolase and HMG-CoA synthase (HMGCS) that catalyzes the first and second step in the mevalonate pathway, respectively.

In terms of biological role, functions as a scaffold to connect the acetoacetyl-CoA thiolase and HMG-CoA synthase (HMGCS) dimers in the channeling thiolase/HMGCS complex, which allows for efficient coupling of the endergonic thiolase reaction with the exergonic HMGCS reaction. The protein is DUF35 domain-containing scaffold protein of Methanothermobacter thermautotrophicus (strain ATCC 29096 / DSM 1053 / JCM 10044 / NBRC 100330 / Delta H) (Methanobacterium thermoautotrophicum).